The chain runs to 130 residues: Small ribosomal subunit protein uS8 (130 aa).

This sequence belongs to the universal ribosomal protein uS8 family. In terms of assembly, part of the 30S ribosomal subunit. Contacts proteins S5 and S12.

In terms of biological role, one of the primary rRNA binding proteins, it binds directly to 16S rRNA central domain where it helps coordinate assembly of the platform of the 30S subunit. This Photorhabdus laumondii subsp. laumondii (strain DSM 15139 / CIP 105565 / TT01) (Photorhabdus luminescens subsp. laumondii) protein is Small ribosomal subunit protein uS8.